Here is a 181-residue protein sequence, read N- to C-terminus: Protein canopy homolog 1 (181 aa).

Positions 1 to 21 (MAILLHFGVLITAFLSSHVEG) are cleaved as a signal peptide. One can recognise a Saposin B-type domain in the interval 25-177 (PILYCGACRA…EETGLCKEYL (153 aa)). Cystine bridges form between Cys-29-Cys-173, Cys-32-Cys-166, and Cys-87-Cys-139. The Prevents secretion from ER motif lies at 178 to 181 (HNEL).

The protein belongs to the canopy family.

It localises to the endoplasmic reticulum. Functionally, plays an role in early embryonic development. The polypeptide is Protein canopy homolog 1 (cnpy1) (Xenopus laevis (African clawed frog)).